The sequence spans 185 residues: Ribosome-recycling factor (185 aa).

The protein belongs to the RRF family.

The protein localises to the cytoplasm. Its function is as follows. Responsible for the release of ribosomes from messenger RNA at the termination of protein biosynthesis. May increase the efficiency of translation by recycling ribosomes from one round of translation to another. In Idiomarina loihiensis (strain ATCC BAA-735 / DSM 15497 / L2-TR), this protein is Ribosome-recycling factor.